Here is a 461-residue protein sequence, read N- to C-terminus: Kynureninase (461 aa).

Pyridoxal 5'-phosphate contacts are provided by residues Leu-114, Thr-115, 142-145, Asp-228, His-231, and Tyr-253; that span reads FPSD. Lys-254 carries the post-translational modification N6-(pyridoxal phosphate)lysine. Pyridoxal 5'-phosphate is bound by residues Trp-288 and Asn-316.

This sequence belongs to the kynureninase family. Homodimer. The cofactor is pyridoxal 5'-phosphate.

It is found in the cytoplasm. It catalyses the reaction L-kynurenine + H2O = anthranilate + L-alanine + H(+). The enzyme catalyses 3-hydroxy-L-kynurenine + H2O = 3-hydroxyanthranilate + L-alanine + H(+). The protein operates within amino-acid degradation; L-kynurenine degradation; L-alanine and anthranilate from L-kynurenine: step 1/1. It functions in the pathway cofactor biosynthesis; NAD(+) biosynthesis; quinolinate from L-kynurenine: step 2/3. Its function is as follows. Catalyzes the cleavage of L-kynurenine (L-Kyn) and L-3-hydroxykynurenine (L-3OHKyn) into anthranilic acid (AA) and 3-hydroxyanthranilic acid (3-OHAA), respectively. This Candida albicans (strain SC5314 / ATCC MYA-2876) (Yeast) protein is Kynureninase.